A 525-amino-acid chain; its full sequence is Ribosomal protein uS12 methylthiotransferase RimO (525 aa).

Polar residues predominate over residues 1–20; sequence MPKISTESVNTTIAPSQPAS. The interval 1-44 is disordered; the sequence is MPKISTESVNTTIAPSQPASTAPKDTATLFNPAKPTATPAQSSI. The MTTase N-terminal domain occupies 82–192; the sequence is PKIGFVSLGC…VIRAVALHVP (111 aa). The [4Fe-4S] cluster site is built by Cys-91, Cys-127, Cys-156, Cys-230, Cys-234, and Cys-237. In terms of domain architecture, Radical SAM core spans 216 to 453; the sequence is LTPSHYAYLK…MTLQQDISAQ (238 aa). One can recognise a TRAM domain in the interval 456-525; sequence QEKIGKTLMV…EYDLFASYQA (70 aa).

Belongs to the methylthiotransferase family. RimO subfamily. [4Fe-4S] cluster serves as cofactor.

The protein localises to the cytoplasm. The enzyme catalyses L-aspartate(89)-[ribosomal protein uS12]-hydrogen + (sulfur carrier)-SH + AH2 + 2 S-adenosyl-L-methionine = 3-methylsulfanyl-L-aspartate(89)-[ribosomal protein uS12]-hydrogen + (sulfur carrier)-H + 5'-deoxyadenosine + L-methionine + A + S-adenosyl-L-homocysteine + 2 H(+). Its function is as follows. Catalyzes the methylthiolation of an aspartic acid residue of ribosomal protein uS12. The polypeptide is Ribosomal protein uS12 methylthiotransferase RimO (Psychrobacter arcticus (strain DSM 17307 / VKM B-2377 / 273-4)).